A 912-amino-acid polypeptide reads, in one-letter code: Microtubule-associated protein 10 (912 aa).

Disordered regions lie at residues 31–50 (VAEE…RPSR), 209–239 (KSVE…ADKP), 254–296 (GRAF…QEGT), 335–366 (ASEE…SATG), 443–469 (SPES…NEKS), and 730–859 (RACD…VSSY). A compositionally biased stretch (polar residues) spans 211–229 (VEVSPQTWQENQQLQQPDS). Positions 254 to 263 (GRAFHSKADS) are enriched in basic and acidic residues. Positions 266–295 (TDSMENGKTNSDMCSKGSSERSVSPPNQEG) are enriched in polar residues. Residues 347 to 362 (ENVNPPTHTNPPEHTN) show a composition bias toward low complexity. The span at 452–468 (CKSESKKDKLSVGENEK) shows a compositional bias: basic and acidic residues. A compositionally biased stretch (polar residues) spans 735–768 (SPGTENPKNSQHTSTSSETRLSIRKNSSAKSSIL). Positions 796-807 (EASSSDFSSSQW) are enriched in low complexity. The span at 841–859 (GCKSSEKSQSPRTSQVSSY) shows a compositional bias: polar residues.

As to quaternary structure, interacts (via middle region) with microtubules.

The protein resides in the cytoplasm. The protein localises to the cytoskeleton. Its subcellular location is the spindle pole. It localises to the microtubule organizing center. It is found in the centrosome. The protein resides in the midbody. Functionally, microtubule-associated protein (MAP) that plays a role in the regulation of cell division; promotes microtubule stability and participates in the organization of the spindle midzone and normal progress of cytokinesis. The polypeptide is Microtubule-associated protein 10 (MAP10) (Bos taurus (Bovine)).